Reading from the N-terminus, the 188-residue chain is UPF0397 protein LCK_00164 (188 aa).

5 helical membrane passes run 15–35 (VVATGIGAAVFFVLMKFIAIP), 48–68 (GWLALIAGLFGPVVGLLVGLI), 79–99 (GAPWWSWVIADGVFGLLLGFG), 121–141 (WQAVSNVLVWVIIAPLGDIII), and 154–174 (AVTTVVNTISVAIIGSLLLVA).

This sequence belongs to the UPF0397 family.

The protein localises to the cell membrane. This Leuconostoc citreum (strain KM20) protein is UPF0397 protein LCK_00164.